The following is a 423-amino-acid chain: Gamma-glutamyl phosphate reductase (423 aa).

It belongs to the gamma-glutamyl phosphate reductase family.

It localises to the cytoplasm. It catalyses the reaction L-glutamate 5-semialdehyde + phosphate + NADP(+) = L-glutamyl 5-phosphate + NADPH + H(+). The protein operates within amino-acid biosynthesis; L-proline biosynthesis; L-glutamate 5-semialdehyde from L-glutamate: step 2/2. Catalyzes the NADPH-dependent reduction of L-glutamate 5-phosphate into L-glutamate 5-semialdehyde and phosphate. The product spontaneously undergoes cyclization to form 1-pyrroline-5-carboxylate. This is Gamma-glutamyl phosphate reductase from Paraburkholderia phymatum (strain DSM 17167 / CIP 108236 / LMG 21445 / STM815) (Burkholderia phymatum).